The following is a 1256-amino-acid chain: Nephrin (1256 aa).

The N-terminal stretch at 1 to 35 (MGAKEATVRGPGASPVHRTCHLIPLLLAGMLTTGL) is a signal peptide. Topologically, residues 36 to 1078 (AQSPVPTSAP…PGPPRLPLLP (1043 aa)) are extracellular. 6 Ig-like C2-type domains span residues 39-144 (PVPT…VILS), 149-247 (PKVL…ASFT), 256-347 (PPVI…RSIT), 354-448 (PSAV…KSLT), 454-554 (PAQK…TQLV), and 558-649 (PPTN…ETVS). Asparagine 54 carries an N-linked (GlcNAc...) asparagine glycan. 3 disulfides stabilise this stretch: cysteine 67–cysteine 125, cysteine 174–cysteine 231, and cysteine 279–cysteine 331. Residues asparagine 370 and asparagine 415 are each glycosylated (N-linked (GlcNAc...) asparagine). Cysteines 375 and 431 form a disulfide. Position 446 is a phosphoserine (serine 446). The cysteines at positions 479 and 542 are disulfide-linked. The disordered stretch occupies residues 491–516 (TWLKDSRPVNDPRQSQEPRRVQLGSV). Residues 494–510 (KDSRPVNDPRQSQEPRR) show a composition bias toward basic and acidic residues. Residues asparagine 561, asparagine 578, asparagine 591, and asparagine 722 are each glycosylated (N-linked (GlcNAc...) asparagine). A disulfide bridge links cysteine 581 with cysteine 637. Ig-like C2-type domains are found at residues 754 to 846 (PTIR…LVRL) and 852 to 953 (PQVD…VSIS). Cystine bridges form between cysteine 775-cysteine 830 and cysteine 877-cysteine 934. A Fibronectin type-III domain is found at 957 to 1051 (PPLGLKVVSV…GIQVSITTPG (95 aa)). The interval 1048-1071 (TTPGLDQAPEDTDQPLPTEQPPGP) is disordered. A helical transmembrane segment spans residues 1079 to 1099 (VLFAVGGLLLLSNASCVGGLL). Over 1100–1256 (WRRRLRRLAE…LPFELRGHLV (157 aa)) the chain is Cytoplasmic. Phosphoserine is present on serine 1112. Over residues 1112–1128 (SEKTEAGSEEDRIRNEY) the composition is skewed to basic and acidic residues. Residues 1112-1143 (SEKTEAGSEEDRIRNEYEESQWTGDRDTRSST) form a disordered region. Threonine 1115 is subject to Phosphothreonine. The residue at position 1119 (serine 1119) is a Phosphoserine. Tyrosine 1208 is subject to Phosphotyrosine; by FYN.

This sequence belongs to the immunoglobulin superfamily. Interacts with NPHS2 and with CD2AP (via C-terminal domain). Interacts with MAGI1 (via PDZ 2 and 3 domains) forming a tripartite complex with IGSF5/JAM4. Forms a complex with ACTN4, CASK, IQGAP1, MAGI2, SPTAN1 and SPTBN1. Interacts with DDN; the interaction is direct. Self-associates (via the Ig-like domains). Also interacts (via the Ig-like domains) with KIRREL1 and KIRREL2; the interaction with KIRREL1 is dependent on KIRREL1 glycosylation. Interacts with KIRREL3. Interacts with phosphatidylinositol 3-kinase regulatory subunit PIK3R1; the interaction is reduced by high glucose levels. In terms of processing, phosphorylated at Tyr-1208 by FYN, leading to the recruitment and activation of phospholipase C-gamma-1/PLCG1. Tyrosine phosphorylation is reduced by high glucose levels. Dephosphorylated by tensin TNS2 which leads to reduced binding of NPHN1 to PIK3R1. In terms of tissue distribution, expressed in kidney glomeruli. In the embryo, expressed in the mesonephric kidney at 11 dpc with strong expression in cranial tubules with podocyte-like structures. Expression is observed in the podocytes of the developing kidney from 13 dpc. High expression is also detected in the developing cerebellum, hindbrain, spinal cord, retina and hypothalamus. Expressed in skeletal muscle during myoblast fusion such as in the adult following acute injury and in the embryo but not detected in uninjured adult skeletal muscle. Isoform 1 and isoform 2 are expressed in the newborn brain and developing cerebellum. Isoform 1 is the predominant isoform in adult kidney.

The protein localises to the cell membrane. Functionally, seems to play a role in the development or function of the kidney glomerular filtration barrier. Regulates glomerular vascular permeability. May anchor the podocyte slit diaphragm to the actin cytoskeleton. Plays a role in skeletal muscle formation through regulation of myoblast fusion. In Mus musculus (Mouse), this protein is Nephrin (Nphs1).